The following is a 479-amino-acid chain: UDP-N-acetylmuramate--L-alanine ligase (479 aa).

Residue 115 to 121 (GTHGKTT) participates in ATP binding.

This sequence belongs to the MurCDEF family.

Its subcellular location is the cytoplasm. It carries out the reaction UDP-N-acetyl-alpha-D-muramate + L-alanine + ATP = UDP-N-acetyl-alpha-D-muramoyl-L-alanine + ADP + phosphate + H(+). It participates in cell wall biogenesis; peptidoglycan biosynthesis. Its function is as follows. Cell wall formation. This is UDP-N-acetylmuramate--L-alanine ligase from Acidiphilium cryptum (strain JF-5).